The chain runs to 256 residues: MSRKKTPKSKAGSAPATSALPAANGPRPVRPGTARPGPEAPPNGPPQPGRSSVGGGGDFYDVAFKVMLVGDSGVGKTCLLVRFKDGAFLAGTFISTVGIDFRNKVVDVDGMKVKLQIWDTAGQERFRSVTHAYYRDAHALLLLYDVTNKASFDSIQAWLTEIQEHAQDDVVLMLLGNKVDSAQERAVKREDAEKLAKDYGLPFMETSAKTGLNVDLAFTAIAKELKQRHTKAPSEPRFQLHDYIKREGRGASCCRP.

The tract at residues 1-53 (MSRKKTPKSKAGSAPATSALPAANGPRPVRPGTARPGPEAPPNGPPQPGRSSV) is disordered. A compositionally biased stretch (pro residues) spans 38–48 (PEAPPNGPPQP). Positions 72, 73, 74, 75, 76, 77, 78, 95, and 96 each coordinate GTP. T77 provides a ligand contact to Mg(2+). 2 consecutive short sequence motifs (switch) follow at residues 86–101 (GAFLAGTFISTVGIDF) and 119–136 (DTAGQERFRSVTHAYYRD). Mg(2+) is bound by residues T96 and D119. The GTP site is built by G122, N177, K178, D180, A208, and K209. S-geranylgeranyl cysteine attachment occurs at residues C253 and C254.

Belongs to the small GTPase superfamily. Rab family. It depends on Mg(2+) as a cofactor.

It is found in the cell membrane. It carries out the reaction GTP + H2O = GDP + phosphate + H(+). Its activity is regulated as follows. Regulated by guanine nucleotide exchange factors (GEFs) which promote the exchange of bound GDP for free GTP. Regulated by GTPase activating proteins (GAPs) which increase the GTP hydrolysis activity. Inhibited by GDP dissociation inhibitors (GDIs). In terms of biological role, the small GTPases Rab are key regulators of intracellular membrane trafficking, from the formation of transport vesicles to their fusion with membranes. Rabs cycle between an inactive GDP-bound form and an active GTP-bound form that is able to recruit to membranes different set of downstream effectors directly responsible for vesicle formation, movement, tethering and fusion. RAB26 mediates transport of ADRA2A and ADRA2B from the Golgi to the cell membrane. Plays a role in the maturation of zymogenic granules and in pepsinogen secretion in the stomach. Plays a role in the secretion of amylase from acinar granules in the parotid gland. The sequence is that of Ras-related protein Rab-26 (RAB26) from Bos taurus (Bovine).